The sequence spans 548 residues: Probable malate:quinone oxidoreductase (548 aa).

Residues Lys-522–Leu-548 form a disordered region. Positions Val-539 to Leu-548 are enriched in basic and acidic residues.

The protein belongs to the MQO family. Requires FAD as cofactor.

It catalyses the reaction (S)-malate + a quinone = a quinol + oxaloacetate. It functions in the pathway carbohydrate metabolism; tricarboxylic acid cycle; oxaloacetate from (S)-malate (quinone route): step 1/1. This is Probable malate:quinone oxidoreductase from Escherichia coli O9:H4 (strain HS).